A 1955-amino-acid polypeptide reads, in one-letter code: 227 kDa spindle- and centromere-associated protein (1955 aa).

Coiled coils occupy residues 82–129 (KKRI…NDDV), 152–317 (EWAS…ELES), 385–1747 (VRNI…LIAL), and 1770–1813 (ERIV…ERFI). Disordered regions lie at residues 1865-1896 (PTEQHASRGKEAYRTSSTIKSSEGTTRESYTY) and 1912-1955 (MTSS…TFSE). Positions 1878 to 1896 (RTSSTIKSSEGTTRESYTY) are enriched in polar residues. The segment covering 1938 to 1948 (RKSRPATRKQQ) has biased composition (basic residues).

It localises to the cytoplasm. Its subcellular location is the cytoskeleton. The protein resides in the microtubule organizing center. The protein localises to the centrosome. It is found in the chromosome. It localises to the centromere. Its subcellular location is the kinetochore. The protein resides in the spindle. Functionally, may play a role in the organization of the spindle apparatus and its interaction with the centromeres. This chain is 227 kDa spindle- and centromere-associated protein (PUMA1), found in Parascaris univalens (Nematode worm).